We begin with the raw amino-acid sequence, 72 residues long: Large ribosomal subunit protein uL29 (72 aa).

The protein belongs to the universal ribosomal protein uL29 family.

The polypeptide is Large ribosomal subunit protein uL29 (Chlamydia caviae (strain ATCC VR-813 / DSM 19441 / 03DC25 / GPIC) (Chlamydophila caviae)).